The chain runs to 345 residues: MNEPTVSETLNSQKPIVFSGAQPSGELTIGNYMGALRQWVKMQDDYDCIYCIVDQHAITVRQDPKELRKRTLDTLALYLACGIDPEKSTIFVQSHVPQHAQLSWILNCYTYFGELSRMTQFKDKSARHAENINAGLFDYPVLMTADILVYQTNQVPVGIDQKQHLELSRDIAQRFNAIYGNIFAVPEPFIPTGGARVMALQDPEKKMSKSDDNRNNVIALLEDPKSAAKKIKRAVTDSEEPPRVRYDLEQKPGVSNLLDLLAGVTGKTIPELEAEFEGQMYGHLKSAVADAVSGMLTELQERFHYFRNDEILLNKIMAEGAAKAKARAQITLDKVYEAVGFIAHP.

ATP contacts are provided by residues 22 to 24 and 30 to 31; these read QPS and GN. The 'HIGH' region motif lies at 23–31; that stretch reads PSGELTIGN. Residue D146 coordinates L-tryptophan. Residues 158–160, V197, and 206–210 contribute to the ATP site; these read GID and KMSKS. A 'KMSKS' region motif is present at residues 206–210; it reads KMSKS.

This sequence belongs to the class-I aminoacyl-tRNA synthetase family. Homodimer.

It localises to the cytoplasm. The enzyme catalyses tRNA(Trp) + L-tryptophan + ATP = L-tryptophyl-tRNA(Trp) + AMP + diphosphate + H(+). In terms of biological role, catalyzes the attachment of tryptophan to tRNA(Trp). This is Tryptophan--tRNA ligase from Photorhabdus laumondii subsp. laumondii (strain DSM 15139 / CIP 105565 / TT01) (Photorhabdus luminescens subsp. laumondii).